We begin with the raw amino-acid sequence, 363 residues long: Ribosomal RNA large subunit methyltransferase M (363 aa).

S-adenosyl-L-methionine contacts are provided by residues S190, 223–226 (CPGG), D242, D262, and D280. K309 acts as the Proton acceptor in catalysis.

This sequence belongs to the class I-like SAM-binding methyltransferase superfamily. RNA methyltransferase RlmE family. RlmM subfamily. Monomer.

It localises to the cytoplasm. It carries out the reaction cytidine(2498) in 23S rRNA + S-adenosyl-L-methionine = 2'-O-methylcytidine(2498) in 23S rRNA + S-adenosyl-L-homocysteine + H(+). Functionally, catalyzes the 2'-O-methylation at nucleotide C2498 in 23S rRNA. In Actinobacillus pleuropneumoniae serotype 5b (strain L20), this protein is Ribosomal RNA large subunit methyltransferase M.